The chain runs to 250 residues: Ribonuclease PH (250 aa).

Residues Arg86 and 124–126 (GTR) contribute to the phosphate site.

Belongs to the RNase PH family. As to quaternary structure, homohexameric ring arranged as a trimer of dimers.

It carries out the reaction tRNA(n+1) + phosphate = tRNA(n) + a ribonucleoside 5'-diphosphate. Phosphorolytic 3'-5' exoribonuclease that plays an important role in tRNA 3'-end maturation. Removes nucleotide residues following the 3'-CCA terminus of tRNAs; can also add nucleotides to the ends of RNA molecules by using nucleoside diphosphates as substrates, but this may not be physiologically important. Probably plays a role in initiation of 16S rRNA degradation (leading to ribosome degradation) during starvation. The chain is Ribonuclease PH from Shouchella clausii (strain KSM-K16) (Alkalihalobacillus clausii).